Here is a 152-residue protein sequence, read N- to C-terminus: Deoxyuridine 5'-triphosphate nucleotidohydrolase (152 aa).

Residues 71–73 (RSG), N84, 88–90 (LID), and M98 contribute to the substrate site.

This sequence belongs to the dUTPase family. Mg(2+) is required as a cofactor.

The catalysed reaction is dUTP + H2O = dUMP + diphosphate + H(+). It functions in the pathway pyrimidine metabolism; dUMP biosynthesis; dUMP from dCTP (dUTP route): step 2/2. Functionally, this enzyme is involved in nucleotide metabolism: it produces dUMP, the immediate precursor of thymidine nucleotides and it decreases the intracellular concentration of dUTP so that uracil cannot be incorporated into DNA. The polypeptide is Deoxyuridine 5'-triphosphate nucleotidohydrolase (Pectobacterium carotovorum subsp. carotovorum (strain PC1)).